Reading from the N-terminus, the 58-residue chain is Protein translocase subunit SecE (58 aa).

Residues 38–58 traverse the membrane as a helical segment; that stretch reads IVMAFVGLLAYLIQLVLAFII.

This sequence belongs to the SecE/SEC61-gamma family. Component of the Sec protein translocase complex. Heterotrimer consisting of SecY (alpha), SecG (beta) and SecE (gamma) subunits. The heterotrimers can form oligomers, although 1 heterotrimer is thought to be able to translocate proteins. Interacts with the ribosome. May interact with SecDF, and other proteins may be involved.

The protein localises to the cell membrane. Essential subunit of the Sec protein translocation channel SecYEG. Clamps together the 2 halves of SecY. May contact the channel plug during translocation. This is Protein translocase subunit SecE from Acidianus ambivalens (Desulfurolobus ambivalens).